The following is a 554-amino-acid chain: Bifunctional epoxide hydrolase 2 (554 aa).

The phosphatase stretch occupies residues 1–224 (MALRVAAFDL…KVTGTQFPEA (224 aa)). The Mg(2+) site is built by Asp-9 and Asp-11. Lys-55 bears the N6-succinyllysine mark. 123 to 124 (TN) contacts phosphate. At Lys-176 the chain carries N6-acetyllysine; alternate. Lys-176 carries the N6-succinyllysine; alternate modification. Residue Asp-185 coordinates Mg(2+). N6-acetyllysine occurs at positions 191 and 215. Residues 233 to 554 (NDVSHGYVTV…IQNPSVTSKI (322 aa)) form an epoxide hydrolase region. Positions 257–530 (PAICLCHGFP…CGHWTQIEKP (274 aa)) constitute an AB hydrolase-1 domain. The active-site Nucleophile is the Asp-333. Ser-368 bears the Phosphoserine mark. Tyr-381 is a binding site for substrate. Residues Lys-420 and Lys-454 each carry the N6-succinyllysine modification. Tyr-465 serves as the catalytic Proton donor. The residue at position 504 (Lys-504) is an N6-succinyllysine. The S-(15-deoxy-Delta12,14-prostaglandin J2-9-yl)cysteine moiety is linked to residue Cys-521. His-523 functions as the Proton acceptor in the catalytic mechanism. The short motif at 552–554 (SKI) is the Microbody targeting signal element. At Lys-553 the chain carries N6-succinyllysine.

It belongs to the AB hydrolase superfamily. Epoxide hydrolase family. In terms of assembly, homodimer. Requires Mg(2+) as cofactor. Post-translationally, the covalent modification of cysteine by 15-deoxy-Delta12,14-prostaglandin-J2 is autocatalytic and reversible. It may occur as an alternative to other cysteine modifications, such as S-nitrosylation and S-palmitoylation.

It localises to the cytoplasm. Its subcellular location is the peroxisome. It carries out the reaction an epoxide + H2O = an ethanediol. The catalysed reaction is (9S,10S)-10-hydroxy-9-(phosphooxy)octadecanoate + H2O = (9S,10S)-9,10-dihydroxyoctadecanoate + phosphate. It catalyses the reaction 8-hydroxy-(11S,12S)-epoxy-(5Z,9E,14Z)-eicosatrienoate + H2O = (8,11R,12S)-trihydroxy-(5Z,9E,14Z)-eicosatrienoate. The enzyme catalyses 10-hydroxy-(11S,12S)-epoxy- (5Z,8Z,14Z)-eicosatrienoate + H2O = (10,11S,12R)-trihydroxy-(5Z,8Z,14Z)-eicosatrienoate. It carries out the reaction 12-phosphooxy-(9Z)-octadecenoate + H2O = 12-hydroxy-(9Z)-octadecenoate + phosphate. The catalysed reaction is 12-phosphooxy-(9E)-octadecenoate + H2O = 12-hydroxy-(9E)-octadecenoate + phosphate. It catalyses the reaction 12-(phosphooxy)octadecanoate + H2O = 12-hydroxyoctadecanoate + phosphate. The enzyme catalyses 8,9-epoxy-(5Z,11Z,14Z)-eicosatrienoate + H2O = 8,9-dihydroxy-(5Z,11Z,14Z)-eicosatrienoate. It carries out the reaction 11,12-epoxy-(5Z,8Z,14Z)-eicosatrienoate + H2O = 11,12-dihydroxy-(5Z,8Z,14Z)-eicosatrienoate. The catalysed reaction is 14,15-epoxy-(5Z,8Z,11Z)-eicosatrienoate + H2O = 14,15-dihydroxy-(5Z,8Z,11Z)-eicosatrienoate. It catalyses the reaction 9,10-epoxy-(12Z)-octadecenoate + H2O = 9,10-dihydroxy-(12Z)-octadecenoate. The enzyme catalyses 1-tetradecanoyl-sn-glycerol 3-phosphate + H2O = 1-tetradecanoyl-sn-glycerol + phosphate. It carries out the reaction 1-octadecanoyl-sn-glycero-3-phosphate + H2O = 1-octadecanoyl-sn-glycerol + phosphate. The catalysed reaction is 1-(5Z,8Z,11Z,14Z-eicosatetraenoyl)-sn-glycero-3-phosphate + H2O = 1-(5Z,8Z,11Z,14Z-eicosatetraenoyl)-sn-glycerol + phosphate. It catalyses the reaction 1-hexadecanoyl-sn-glycero-3-phosphate + H2O = 1-hexadecanoyl-sn-glycerol + phosphate. The enzyme catalyses 1-(9Z-octadecenoyl)-sn-glycero-3-phosphate + H2O = 1-(9Z-octadecenoyl)-sn-glycerol + phosphate. It carries out the reaction (8S,9R)-epoxy-(5Z,11Z,14Z)-eicosatrienoate + H2O = (8S,9S)-dihydroxy-(5Z,11Z,14Z)-eicosatrienoate. The catalysed reaction is (11S,12R)-epoxy-(5Z,8Z,14Z)-eicosatrienoate + H2O = (11R,12R)-dihydroxy-(5Z,8Z,14Z)-eicosatrienoate. It catalyses the reaction (11S,12R)-epoxy-(5Z,8Z,14Z)-eicosatrienoate + H2O = (11S,12S)-dihydroxy-(5Z,8Z,14Z)-eicosatrienoate. The enzyme catalyses (14S,15R)-epoxy-(5Z,8Z,11Z)-eicosatrienoate + H2O = (14R,15R)-dihydroxy-(5Z,8Z,11Z)-eicosatrienoate. It carries out the reaction (14S,15R)-epoxy-(5Z,8Z,11Z)-eicosatrienoate + H2O = (14S,15S)-dihydroxy-(5Z,8Z,11Z)-eicosatrienoate. The catalysed reaction is (11R,12S)-epoxy-(5Z,8Z,14Z)-eicosatrienoate + H2O = (11S,12S)-dihydroxy-(5Z,8Z,14Z)-eicosatrienoate. It catalyses the reaction (11R,12S)-epoxy-(5Z,8Z,14Z)-eicosatrienoate + H2O = (11R,12R)-dihydroxy-(5Z,8Z,14Z)-eicosatrienoate. The enzyme catalyses (8S,9R)-epoxy-(5Z,11Z,14Z)-eicosatrienoate + H2O = (8R,9R)-dihydroxy-(5Z,11Z,14Z)-eicosatrienoate. It carries out the reaction (14R,15S)-epoxy-(5Z,8Z,11Z)-eicosatrienoate + H2O = (14R,15R)-dihydroxy-(5Z,8Z,11Z)-eicosatrienoate. With respect to regulation, inhibited by 1-(1-acetylpiperidin-4-yl)-3-(4-(trifl uoromethoxy)phenyl)urea (TPAU), 1-cyclohexyl-3-dodecylurea (CDU), 12-(3-adamantan-1-yl-ureido)-dodecanoic acid (AUDA), 1-((3S, 5S, 7S)-adamantan-1-yl)-3-(5-(2-(2-ethoxyethoxy) ethoxy)pentyl)urea (AEPU), N-adamantyl-N[']-cyclohexyl urea (ACU), 4-(((1S, 4S)-4-(3-((3S, 5S, 7S)-adamantan-1-yl) ureido)cyclohexyl)oxy)benzoic acid (c-AUCB), 4-(((1R, 4R)-4-(3-((3S, 5S, 7S)-adamantan-1-yl)ureido)cyclohexyl)oxy)benzoic acid (t-AUCB), 4-(((1R, 4R)-4-(3-(4(trifluoromethoxy)phenyl)ureido)cyclohexyl)oxy)benzoic acid (t-TAUCB) and to a lesser extent by 8-(3-((3S, 5S, 7S)-adamantan-1-yl)ureido) octanoic acid (AUOA). Phosphatase activity is inhibited by dodecyl-phosphate, phospholipids such as phospho-lysophosphatidic acids and fatty acids such as palmitic acid and lauric acid. Its function is as follows. Bifunctional enzyme. The C-terminal domain has epoxide hydrolase activity and acts on epoxides (alkene oxides, oxiranes) and arene oxides. Plays a role in xenobiotic metabolism by degrading potentially toxic epoxides. Also determines steady-state levels of physiological mediators. The N-terminal domain has lipid phosphatase activity, with the highest activity towards threo-9,10-phosphonooxy-hydroxy-octadecanoic acid, followed by erythro-9,10-phosphonooxy-hydroxy-octadecanoic acid, 12-phosphonooxy-octadec-9Z-enoic acid and 12-phosphonooxy-octadec-9E-enoic acid. In terms of biological role, bifunctional enzyme. The C-terminal domain has epoxide hydrolase activity and acts on epoxides (alkene oxides, oxiranes) and arene oxides. Plays a role in xenobiotic metabolism by degrading potentially toxic epoxides. Also determines steady-state levels of physiological mediators. Bifunctional enzyme. The N-terminal domain has lipid phosphatase activity, with the highest activity towards threo-9,10-phosphonooxy-hydroxy-octadecanoic acid, followed by erythro-9,10-phosphonooxy-hydroxy-octadecanoic acid, 12-phosphonooxy-octadec-9Z-enoic acid and 12-phosphonooxy-octadec-9E-enoic acid. Has phosphatase activity toward lyso-glycerophospholipids with also some lower activity toward lysolipids of sphingolipid and isoprenoid phosphates. In Rattus norvegicus (Rat), this protein is Bifunctional epoxide hydrolase 2.